Here is a 144-residue protein sequence, read N- to C-terminus: Putative 2'-deoxynucleoside 5'-phosphate N-hydrolase 1 (144 aa).

Substrate contacts are provided by residues 7–13, Tyr22, His39, Glu83, and 107–109; these read YFCGSIR and SGM.

The protein belongs to the 2'-deoxynucleoside 5'-phosphate N-hydrolase 1 family. Monomer and homodimer.

The protein localises to the cytoplasm. The protein resides in the nucleus. It carries out the reaction a pyrimidine 2'-deoxyribonucleoside 5'-phosphate + H2O = a pyrimidine nucleobase + 2-deoxy-D-ribose 5-phosphate. It catalyses the reaction a purine 2'-deoxyribonucleoside 5'-phosphate + H2O = a purine nucleobase + 2-deoxy-D-ribose 5-phosphate. Its function is as follows. Catalyzes the cleavage of the N-glycosidic bond of deoxyribonucleoside 5'-monophosphates to yield deoxyribose 5-phosphate and a purine or pyrimidine base. The sequence is that of Putative 2'-deoxynucleoside 5'-phosphate N-hydrolase 1 from Trichoplax adhaerens (Trichoplax reptans).